The sequence spans 526 residues: Cholesterol side-chain cleavage enzyme, mitochondrial (526 aa).

The N-terminal 36 residues, 1–36 (MLAKGLSLRSVLVKGCQPFLSPTWQGPVLSTGKGAG), are a transit peptide targeting the mitochondrion. Over residues 30–41 (STGKGAGTSTSS) the composition is skewed to low complexity. The disordered stretch occupies residues 30–49 (STGKGAGTSTSSPRSFNEIP). C458 provides a ligand contact to heme.

This sequence belongs to the cytochrome P450 family. In terms of assembly, interacts with FDX1/adrenodoxin. It depends on heme as a cofactor.

It is found in the mitochondrion inner membrane. It catalyses the reaction 6 reduced [adrenodoxin] + cholesterol + 3 O2 + 6 H(+) = 4-methylpentanal + pregnenolone + 6 oxidized [adrenodoxin] + 4 H2O. The catalysed reaction is 2 reduced [adrenodoxin] + cholesterol + O2 + 2 H(+) = (22R)-hydroxycholesterol + 2 oxidized [adrenodoxin] + H2O. It carries out the reaction (22R)-hydroxycholesterol + 2 reduced [adrenodoxin] + O2 + 2 H(+) = (20R,22R)-20,22-dihydroxycholesterol + 2 oxidized [adrenodoxin] + H2O. The enzyme catalyses (20R,22R)-20,22-dihydroxycholesterol + 2 reduced [adrenodoxin] + O2 + 2 H(+) = 4-methylpentanal + pregnenolone + 2 oxidized [adrenodoxin] + 2 H2O. It participates in lipid metabolism; C21-steroid hormone metabolism. It functions in the pathway steroid metabolism; cholesterol metabolism. Its function is as follows. A cytochrome P450 monooxygenase that catalyzes the side-chain hydroxylation and cleavage of cholesterol to pregnenolone, the precursor of most steroid hormones. Catalyzes three sequential oxidation reactions of cholesterol, namely the hydroxylation at C22 followed with the hydroxylation at C20 to yield 20R,22R-hydroxycholesterol that is further cleaved between C20 and C22 to yield the C21-steroid pregnenolone and 4-methylpentanal. Mechanistically, uses molecular oxygen inserting one oxygen atom into a substrate and reducing the second into a water molecule. Two electrons are provided by NADPH via a two-protein mitochondrial transfer system comprising flavoprotein FDXR (adrenodoxin/ferredoxin reductase) and nonheme iron-sulfur protein FDX1 or FDX2 (adrenodoxin/ferredoxin). This is Cholesterol side-chain cleavage enzyme, mitochondrial from Mus musculus (Mouse).